Reading from the N-terminus, the 315-residue chain is T-box transcription factor tbx-8 (315 aa).

The segment at residues 11-195 (EDQDKLWNLF…FNPFAKGFRE (185 aa)) is a DNA-binding region (T-box). Residues 193-203 (FREGSQSDRKR) are compositionally biased toward basic and acidic residues. Disordered regions lie at residues 193–235 (FREG…SVSP) and 293–315 (PPPSLKNVKKEEQEDIEQEINVV). The span at 205–225 (SPSADDSTTDESSSQVSSPQP) shows a compositional bias: low complexity. Acidic residues predominate over residues 305 to 315 (QEDIEQEINVV).

It localises to the nucleus. In terms of biological role, transcription factor. Involved in the control of early morphogenesis of the intestine, hypodermis and body-wall muscle. Involved in regulating expression of vab-7. Appears to have partially redundant function to tbx-9. This is T-box transcription factor tbx-8 (tbx-8) from Caenorhabditis elegans.